The sequence spans 306 residues: UDP-3-O-acyl-N-acetylglucosamine deacetylase (306 aa).

The Zn(2+) site is built by histidine 79, histidine 238, and aspartate 242. Histidine 265 functions as the Proton donor in the catalytic mechanism.

Belongs to the LpxC family. It depends on Zn(2+) as a cofactor.

It carries out the reaction a UDP-3-O-[(3R)-3-hydroxyacyl]-N-acetyl-alpha-D-glucosamine + H2O = a UDP-3-O-[(3R)-3-hydroxyacyl]-alpha-D-glucosamine + acetate. It participates in glycolipid biosynthesis; lipid IV(A) biosynthesis; lipid IV(A) from (3R)-3-hydroxytetradecanoyl-[acyl-carrier-protein] and UDP-N-acetyl-alpha-D-glucosamine: step 2/6. Functionally, catalyzes the hydrolysis of UDP-3-O-myristoyl-N-acetylglucosamine to form UDP-3-O-myristoylglucosamine and acetate, the committed step in lipid A biosynthesis. The protein is UDP-3-O-acyl-N-acetylglucosamine deacetylase of Idiomarina loihiensis (strain ATCC BAA-735 / DSM 15497 / L2-TR).